Reading from the N-terminus, the 523-residue chain is GMP synthase [glutamine-hydrolyzing] (523 aa).

Positions 8–205 constitute a Glutamine amidotransferase type-1 domain; it reads KILILDFGSQ…VVGICGCECK (198 aa). The active-site Nucleophile is Cys-85. Active-site residues include His-179 and Glu-181. One can recognise a GMPS ATP-PPase domain in the interval 206 to 398; that stretch reads WTAENIIERR…LGLPAEMLNR (193 aa). An ATP-binding site is contributed by 233–239; that stretch reads SGGVDSS.

Homodimer.

The enzyme catalyses XMP + L-glutamine + ATP + H2O = GMP + L-glutamate + AMP + diphosphate + 2 H(+). The protein operates within purine metabolism; GMP biosynthesis; GMP from XMP (L-Gln route): step 1/1. Its function is as follows. Catalyzes the synthesis of GMP from XMP. This Actinobacillus pleuropneumoniae serotype 5b (strain L20) protein is GMP synthase [glutamine-hydrolyzing].